We begin with the raw amino-acid sequence, 493 residues long: Sorting nexin-4 (493 aa).

The disordered stretch occupies residues 1-77 (MAVIDQDNFS…ILDCTVSDPH (77 aa)). Residues 7-28 (DNFSNISWHSEQNAESAASTAQ) show a composition bias toward polar residues. The segment covering 56 to 65 (MEHDELDHSG) has biased composition (basic and acidic residues). The PX domain occupies 68-190 (ILDCTVSDPH…AFLESPDWNA (123 aa)). Residues Arg-111, Thr-113, Lys-137, and Arg-156 each coordinate a 1,2-diacyl-sn-glycero-3-phospho-(1D-myo-inositol-3-phosphate). Coiled-coil stretches lie at residues 248 to 292 (EIKE…QKLI), 338 to 363 (SGTL…EYLN), and 405 to 442 (EQAR…QVSR).

It belongs to the sorting nexin family.

It is found in the cytoplasm. The protein localises to the membrane. It localises to the endosome membrane. Its function is as follows. Sorting nexin, involved in the separation or division of vacuoles throughout the entire life cycle of the cells. Involved in retrieval of late-Golgi SNAREs from post-Golgi endosomes to the trans-Golgi network, for cytoplasm to vacuole transport (Cvt), and autophagy of large cargos including mitophagy, pexophagy and glycophagy. This Neurospora crassa (strain ATCC 24698 / 74-OR23-1A / CBS 708.71 / DSM 1257 / FGSC 987) protein is Sorting nexin-4 (vsp-5).